A 332-amino-acid chain; its full sequence is dTDP-3,4-didehydro-2,6-dideoxy-alpha-D-glucose 3-reductase (332 aa).

17–23 (CADIAWR) provides a ligand contact to NADP(+). Substrate is bound at residue Arg24. Residues 42–43 (SR), Tyr63, Leu79, and His84 contribute to the NADP(+) site. The Proton donor role is filled by Lys102. Positions 170 and 182 each coordinate NADP(+). Substrate contacts are provided by Tyr240 and Thr260.

This sequence belongs to the Gfo/Idh/MocA family. In terms of assembly, homotetramer; dimer of dimers.

The enzyme catalyses dTDP-4-dehydro-2,6-dideoxy-alpha-D-glucose + NADP(+) = dTDP-3,4-didehydro-2,6-dideoxy-alpha-D-glucose + NADPH + H(+). It participates in antibiotic biosynthesis. Functionally, involved in the biosynthesis of L-digitoxose, an unusual dideoxysugar attached to various pharmacologically active natural products, including the antitumor antibiotic tetrocarcin A, and the antibiotics kijanimicin and jadomycin B. Catalyzes the reduction of the C-3 keto moiety of dTDP-3,4-diketo-2,6-dideoxy-alpha-D-glucose to yield dTDP-4-keto-2,6-dideoxy-alpha-D-glucose. Also able to reduce dTDP-3-keto-6-deoxy-D-galactose and dTDP-3-keto-6-deoxy-D-glucose to yield dTDP-fucose and dTDP-quinovose, respectively. This Actinomadura kijaniata protein is dTDP-3,4-didehydro-2,6-dideoxy-alpha-D-glucose 3-reductase.